Reading from the N-terminus, the 504-residue chain is Protein Dok-7 (504 aa).

The PH domain maps to 4 to 109 (AALVEGQVKL…WDTRIRYALG (106 aa)). An IRS-type PTB domain is found at 105–210 (RYALGEVHRF…RGISPTKGPF (106 aa)). Disordered stretches follow at residues 210 to 232 (FGLR…ERVA), 248 to 348 (LSHS…HSSY), and 371 to 483 (SLLS…PHAG). A compositionally biased stretch (low complexity) spans 263 to 280 (LSSSSSEASHSDISASSR). 3 stretches are compositionally biased toward polar residues: residues 285-297 (PEQS…TSQE), 331-341 (GRQSSSDSGIA), and 421-430 (PASQGSSDHG).

In terms of assembly, homodimer. Forms a heterotetramer composed of 2 DOK7 and 2 MUSK molecules which facilitates MUSK trans-autophosphorylation on tyrosine residue and activation. Interacts (via IRS-type PTB domain) with MUSK (via cytoplasmic part); requires MUSK phosphorylation.

The protein resides in the cell membrane. It localises to the synapse. In terms of biological role, probable muscle-intrinsic activator of MUSK that plays an essential role in neuromuscular synaptogenesis. Acts in aneural activation of MUSK and subsequent acetylcholine receptor (AchR) clustering in myotubes. Induces autophosphorylation of MUSK. The sequence is that of Protein Dok-7 (Dok7) from Mus musculus (Mouse).